The primary structure comprises 474 residues: tRNA-2-methylthio-N(6)-dimethylallyladenosine synthase (474 aa).

The 118-residue stretch at 3–120 folds into the MTTase N-terminal domain; it reads KKLHIKTWGC…LPEMIEQVRR (118 aa). [4Fe-4S] cluster-binding residues include Cys-12, Cys-49, Cys-83, Cys-157, Cys-161, and Cys-164. Positions 143–375 constitute a Radical SAM core domain; sequence RAEGPTAFVS…QDRITQQAMR (233 aa). The TRAM domain occupies 378–441; it reads RHMMGTVQRI…TNSLRGVFIR (64 aa).

It belongs to the methylthiotransferase family. MiaB subfamily. Monomer. [4Fe-4S] cluster serves as cofactor.

Its subcellular location is the cytoplasm. It carries out the reaction N(6)-dimethylallyladenosine(37) in tRNA + (sulfur carrier)-SH + AH2 + 2 S-adenosyl-L-methionine = 2-methylsulfanyl-N(6)-dimethylallyladenosine(37) in tRNA + (sulfur carrier)-H + 5'-deoxyadenosine + L-methionine + A + S-adenosyl-L-homocysteine + 2 H(+). Catalyzes the methylthiolation of N6-(dimethylallyl)adenosine (i(6)A), leading to the formation of 2-methylthio-N6-(dimethylallyl)adenosine (ms(2)i(6)A) at position 37 in tRNAs that read codons beginning with uridine. In Shewanella baltica (strain OS155 / ATCC BAA-1091), this protein is tRNA-2-methylthio-N(6)-dimethylallyladenosine synthase.